A 257-amino-acid polypeptide reads, in one-letter code: MDRIIEKLDHGWWVVSHEQKLWLPKGELPYGEAANFDLVGQRALQIGEWQGEPVWLIQQQRRHDMGSVRQVIDLDVGLFLLAGRGVQLAEFYRSHKYCGYCGHEMYPSKTEWAMLCSHCRERYYPQIAPCIIVAIRRDDSILLAQHTRHRNGVHTVLAGFVEVGETLEQAVAREVMEESGIKVKNLRYVTSQPWPFPQSLMTAFMADYDSGDIVIDPKELLEANWYRYDNLPLLPVPGTVARRLIEDTVALCRAEYE.

The substrate site is built by Lys-25 and Arg-69. The Zn(2+) site is built by Cys-98 and Cys-101. Residue Glu-111 coordinates substrate. Zn(2+) is bound by residues Cys-116 and Cys-119. Tyr-124 is a substrate binding site. Positions 125 to 248 (PQIAPCIIVA…TVARRLIEDT (124 aa)) constitute a Nudix hydrolase domain. Residues Ala-158, Glu-174, and Glu-178 each contribute to the a divalent metal cation site. Residues 159 to 180 (GFVEVGETLEQAVAREVMEESG) carry the Nudix box motif. 192–199 (QPWPFPQS) contacts substrate. Glu-219 is a binding site for a divalent metal cation. Substrate is bound at residue Ala-241.

This sequence belongs to the Nudix hydrolase family. NudC subfamily. In terms of assembly, homodimer. The cofactor is Mg(2+). Mn(2+) serves as cofactor. Requires Zn(2+) as cofactor.

It catalyses the reaction a 5'-end NAD(+)-phospho-ribonucleoside in mRNA + H2O = a 5'-end phospho-adenosine-phospho-ribonucleoside in mRNA + beta-nicotinamide D-ribonucleotide + 2 H(+). The catalysed reaction is NAD(+) + H2O = beta-nicotinamide D-ribonucleotide + AMP + 2 H(+). It carries out the reaction NADH + H2O = reduced beta-nicotinamide D-ribonucleotide + AMP + 2 H(+). MRNA decapping enzyme that specifically removes the nicotinamide adenine dinucleotide (NAD) cap from a subset of mRNAs by hydrolyzing the diphosphate linkage to produce nicotinamide mononucleotide (NMN) and 5' monophosphate mRNA. The NAD-cap is present at the 5'-end of some mRNAs and stabilizes RNA against 5'-processing. Has preference for mRNAs with a 5'-end purine. Catalyzes the hydrolysis of a broad range of dinucleotide pyrophosphates. The protein is NAD-capped RNA hydrolase NudC of Shigella dysenteriae serotype 1 (strain Sd197).